Reading from the N-terminus, the 278-residue chain is Large ribosomal subunit protein uL2 (278 aa).

2 disordered regions span residues 32-54 and 221-278; these read SLCR…TRHI and RGMT…RNAK. A compositionally biased stretch (gly residues) spans 232 to 245; that stretch reads NGGGEGKSKSGGGR.

Belongs to the universal ribosomal protein uL2 family. In terms of assembly, part of the 50S ribosomal subunit. Forms a bridge to the 30S subunit in the 70S ribosome.

One of the primary rRNA binding proteins. Required for association of the 30S and 50S subunits to form the 70S ribosome, for tRNA binding and peptide bond formation. It has been suggested to have peptidyltransferase activity; this is somewhat controversial. Makes several contacts with the 16S rRNA in the 70S ribosome. The sequence is that of Large ribosomal subunit protein uL2 from Akkermansia muciniphila (strain ATCC BAA-835 / DSM 22959 / JCM 33894 / BCRC 81048 / CCUG 64013 / CIP 107961 / Muc).